Reading from the N-terminus, the 293-residue chain is Mycothiol S-conjugate amidase (293 aa).

The Zn(2+) site is built by His-13, Asp-16, and His-144.

This sequence belongs to the MshB deacetylase family. Mca subfamily. Monomer. It depends on Zn(2+) as a cofactor.

It carries out the reaction mycothiol S-conjugate + H2O = an N-acetyl-L-cysteine-S-conjugate + 1D-myo-inositol 2-amino-2-deoxy-alpha-D-glucopyranoside. Functionally, a mycothiol (MSH, N-acetylcysteinyl-glucosaminyl-inositol) S-conjugate amidase, it recycles conjugated MSH to the N-acetyl cysteine conjugate (AcCys S-conjugate, a mercapturic acid) and the MSH precursor. Involved in MSH-dependent detoxification of a number of alkylating agents and antibiotics. The protein is Mycothiol S-conjugate amidase of Streptomyces coelicolor (strain ATCC BAA-471 / A3(2) / M145).